The chain runs to 490 residues: MMSARSVSPKVLLDISYKPTLPNIMELQNNVIKLIQVEQQAYMQSGYQLQHQQQHLHSHQHHQQHHQQQHAQYAPLPSEYAAYGITELEDTDYNIPSNEVLSTSSNQSAQSTSLELNNNNTSSNTNSSGNNPSGFDGQASSGSSWNEHGKRARSSGDYDCQTGGSLVMQPEHKKLIHQQQQQQQQHQQQIYVDYLPTTVDEVASAQSCPGVQSTCTSPQSHFDFPDEELPEHKAQVFLPLYNNQQQQSQQLQQQQPHQQSHAQMHFQNAYRQSFEGYEPANSLNGSAYSSSDRDDMEYARHNALSSVSDLNGGVMSPACLADDGSAGSLLDGSDAGGKAFRKPRRRLKRKPSKTEETDEFSNQRVMANVRERQRTQSLNDAFKSLQQIIPTLPSDKLSKIQTLKLATRYIDFLCRMLSSSDISLLKALEAQGSPSAYGSASSLLSAAANGAEADLKCLRKANGAPIIPPEKLSYLFGVWRMEGDAQHQKA.

Disordered stretches follow at residues 48–72, 96–165, and 244–264; these read QLQH…QHAQ, PSNE…TGGS, and QQQQ…HAQM. A compositionally biased stretch (basic residues) spans 54 to 68; sequence QHLHSHQHHQQHHQQ. 2 stretches are compositionally biased toward low complexity: residues 102–134 and 244–263; these read STSS…NPSG and QQQQ…SHAQ. Residues S325 and S328 each carry the phosphoserine modification. Residues 330 to 361 form a disordered region; it reads LDGSDAGGKAFRKPRRRLKRKPSKTEETDEFS. Residues 339 to 351 are compositionally biased toward basic residues; it reads AFRKPRRRLKRKP. Positions 362–413 constitute a bHLH domain; the sequence is NQRVMANVRERQRTQSLNDAFKSLQQIIPTLPSDKLSKIQTLKLATRYIDFL.

Efficient DNA binding requires dimerization with another bHLH protein. Homodimer. Interacts with akirin. In terms of tissue distribution, expressed in embryonic abdomen; a single cell ventrally, pairs of cells laterally and three cells dorsally in each hemisegment. In the thorax, there are patches of cells associated with the imaginal disks. During larval development, cells proliferate and, in the abdomen, they form ventral, lateral and dorsal clusters, which are the precursors of the adult abdominal muscles. In the thorax, they form populations of cells in the imaginal disks that correspond to the adepithelial cells.

It is found in the nucleus. Involved in the establishment and dorsoventral patterning of germ layers in the embryo. The chain is Protein twist (twi) from Drosophila melanogaster (Fruit fly).